We begin with the raw amino-acid sequence, 194 residues long: Ion-translocating oxidoreductase complex subunit A (194 aa).

The next 6 membrane-spanning stretches (helical) occupy residues 4–24 (LALILVSAILVNNFVLVQFLG), 39–59 (IGLSLATTFVLTLAAICSYIL), 71–91 (FLRTIGFILVIAVVVQFTEML), 102–122 (VLGIFLPLITTNCIVLGVALL), 135–155 (TTQGFGAGLGFSLVLVLFAAL), and 172–192 (AIGMITAGLMSLAFMGFSGLI).

This sequence belongs to the NqrDE/RnfAE family. In terms of assembly, the complex is composed of six subunits: RnfA, RnfB, RnfC, RnfD, RnfE and RnfG.

It localises to the cell inner membrane. Functionally, part of a membrane-bound complex that couples electron transfer with translocation of ions across the membrane. This Pseudomonas paraeruginosa (strain DSM 24068 / PA7) (Pseudomonas aeruginosa (strain PA7)) protein is Ion-translocating oxidoreductase complex subunit A.